A 199-amino-acid chain; its full sequence is Probable thymidylate kinase (199 aa).

Residue 9–16 participates in ATP binding; sequence GIDGCGKT.

The protein belongs to the thymidylate kinase family.

The catalysed reaction is dTMP + ATP = dTDP + ADP. This chain is Probable thymidylate kinase, found in Methanococcus maripaludis (strain C6 / ATCC BAA-1332).